A 724-amino-acid chain; its full sequence is Phenylalanine ammonia-lyase (724 aa).

Y91 acts as the Proton donor/acceptor in catalysis. Positions 205-207 (ASG) form a cross-link, 5-imidazolinone (Ala-Gly). S206 carries the post-translational modification 2,3-didehydroalanine (Ser). (E)-cinnamate is bound by residues N265, Q357, R363, N393, K467, E495, and N498.

It belongs to the PAL/histidase family. Homotetramer. Contains an active site 4-methylidene-imidazol-5-one (MIO), which is formed autocatalytically by cyclization and dehydration of residues Ala-Ser-Gly.

The protein localises to the cytoplasm. The enzyme catalyses L-phenylalanine = (E)-cinnamate + NH4(+). Its pathway is phenylpropanoid metabolism; trans-cinnamate biosynthesis; trans-cinnamate from L-phenylalanine: step 1/1. Functionally, catalyzes the non-oxidative deamination of L-phenylalanine to form trans-cinnamic acid and a free ammonium ion. Facilitates the commitment step in phenylpropanoid pathways that produce secondary metabolites such as lignins, coumarins and flavonoids. The polypeptide is Phenylalanine ammonia-lyase (PAL1) (Mycosarcoma maydis (Corn smut fungus)).